Reading from the N-terminus, the 295-residue chain is MSPSRPGFSCSWLPYLLVLPQLAITAIFFLWPAGEALWYSVQTLDPFGLSSEFVGLSNFIQLFQDEYYLASFYTTLIFSALVAGIGLIVSLFLAAMVNYVLRGSRLYQTLLILPYAVAPAVAAVLWIFLFDPGLGLITHALAKLGYSWNHAQNSGQAMFLVVLASVWKQISYNFLFFLAALQSIPKSLVEAAAIDGAGPVRRFFNLVLPLISPVSFFLLVVNLVYAFFDTFPVIDAATGGGPVQATTTLIYKIYREGFAGLDLSSSAAQSVILMLLVIGLTVIQFRFVERKVRYQ.

Over 1-11 the chain is Cytoplasmic; that stretch reads MSPSRPGFSCS. A helical membrane pass occupies residues 12–32; sequence WLPYLLVLPQLAITAIFFLWP. The Periplasmic segment spans residues 33–80; the sequence is AGEALWYSVQTLDPFGLSSEFVGLSNFIQLFQDEYYLASFYTTLIFSA. In terms of domain architecture, ABC transmembrane type-1 spans 72 to 284; it reads FYTTLIFSAL…LLVIGLTVIQ (213 aa). The chain crosses the membrane as a helical span at residues 81 to 101; that stretch reads LVAGIGLIVSLFLAAMVNYVL. Residues 102 to 109 lie on the Cytoplasmic side of the membrane; sequence RGSRLYQT. Residues 110–130 traverse the membrane as a helical segment; it reads LLILPYAVAPAVAAVLWIFLF. Topologically, residues 131 to 157 are periplasmic; it reads DPGLGLITHALAKLGYSWNHAQNSGQA. A helical transmembrane segment spans residues 158–178; sequence MFLVVLASVWKQISYNFLFFL. At 179–207 the chain is on the cytoplasmic side; that stretch reads AALQSIPKSLVEAAAIDGAGPVRRFFNLV. Residues 208 to 228 traverse the membrane as a helical segment; that stretch reads LPLISPVSFFLLVVNLVYAFF. At 229–262 the chain is on the periplasmic side; the sequence is DTFPVIDAATGGGPVQATTTLIYKIYREGFAGLD. A helical membrane pass occupies residues 263–283; sequence LSSSAAQSVILMLLVIGLTVI. At 284–295 the chain is on the cytoplasmic side; it reads QFRFVERKVRYQ.

Belongs to the binding-protein-dependent transport system permease family. UgpAE subfamily. In terms of assembly, the complex is composed of two ATP-binding proteins (UgpC), two transmembrane proteins (UgpA and UgpE) and a solute-binding protein (UgpB).

It localises to the cell inner membrane. Its function is as follows. Part of the ABC transporter complex UgpBAEC involved in sn-glycerol-3-phosphate (G3P) import. Probably responsible for the translocation of the substrate across the membrane. The chain is sn-glycerol-3-phosphate transport system permease protein UgpA (ugpA) from Yersinia pestis bv. Antiqua (strain Antiqua).